The following is a 657-amino-acid chain: Tetracycline resistance protein TetQ (657 aa).

One can recognise a tr-type G domain in the interval 17–260 (MNIINLGILA…AISSFILPPE (244 aa)). GTP is bound by residues 26–33 (AHIDAGKT), 90–94 (DTPGH), and 144–147 (NKID).

It belongs to the TRAFAC class translation factor GTPase superfamily. Classic translation factor GTPase family. TetM/TetO subfamily.

Its function is as follows. Abolishes the inhibitory effect of tetracycline on protein synthesis by non-covalently modifying ribosomes. Confers mild resistance to tetracycline when expressed in E.coli. The protein is Tetracycline resistance protein TetQ (tetQ) of Bacteroides fragilis.